Consider the following 148-residue polypeptide: SsrA-binding protein (148 aa).

This sequence belongs to the SmpB family.

It localises to the cytoplasm. Its function is as follows. Required for rescue of stalled ribosomes mediated by trans-translation. Binds to transfer-messenger RNA (tmRNA), required for stable association of tmRNA with ribosomes. tmRNA and SmpB together mimic tRNA shape, replacing the anticodon stem-loop with SmpB. tmRNA is encoded by the ssrA gene; the 2 termini fold to resemble tRNA(Ala) and it encodes a 'tag peptide', a short internal open reading frame. During trans-translation Ala-aminoacylated tmRNA acts like a tRNA, entering the A-site of stalled ribosomes, displacing the stalled mRNA. The ribosome then switches to translate the ORF on the tmRNA; the nascent peptide is terminated with the 'tag peptide' encoded by the tmRNA and targeted for degradation. The ribosome is freed to recommence translation, which seems to be the essential function of trans-translation. In Ehrlichia ruminantium (strain Welgevonden), this protein is SsrA-binding protein.